The following is a 476-amino-acid chain: Bifunctional protein HldE (476 aa).

The segment at 1-319 is ribokinase; that stretch reads MKVSLPAFEK…EALALHHGES (319 aa). Position 195 to 198 (195 to 198) interacts with ATP; sequence NMSE. Aspartate 264 is an active-site residue. Positions 345-476 are cytidylyltransferase; the sequence is MTNGCFDILH…AIIQNIMAKQ (132 aa).

In the N-terminal section; belongs to the carbohydrate kinase PfkB family. This sequence in the C-terminal section; belongs to the cytidylyltransferase family. As to quaternary structure, homodimer.

It carries out the reaction D-glycero-beta-D-manno-heptose 7-phosphate + ATP = D-glycero-beta-D-manno-heptose 1,7-bisphosphate + ADP + H(+). The enzyme catalyses D-glycero-beta-D-manno-heptose 1-phosphate + ATP + H(+) = ADP-D-glycero-beta-D-manno-heptose + diphosphate. Its pathway is nucleotide-sugar biosynthesis; ADP-L-glycero-beta-D-manno-heptose biosynthesis; ADP-L-glycero-beta-D-manno-heptose from D-glycero-beta-D-manno-heptose 7-phosphate: step 1/4. It functions in the pathway nucleotide-sugar biosynthesis; ADP-L-glycero-beta-D-manno-heptose biosynthesis; ADP-L-glycero-beta-D-manno-heptose from D-glycero-beta-D-manno-heptose 7-phosphate: step 3/4. Catalyzes the phosphorylation of D-glycero-D-manno-heptose 7-phosphate at the C-1 position to selectively form D-glycero-beta-D-manno-heptose-1,7-bisphosphate. In terms of biological role, catalyzes the ADP transfer from ATP to D-glycero-beta-D-manno-heptose 1-phosphate, yielding ADP-D-glycero-beta-D-manno-heptose. The sequence is that of Bifunctional protein HldE from Shewanella sp. (strain ANA-3).